Here is a 24-residue protein sequence, read N- to C-terminus: Waglerin-3 (24 aa).

Residues 1–10 (SLGGKPDLRP) show a composition bias toward basic and acidic residues. The disordered stretch occupies residues 1 to 24 (SLGGKPDLRPCHPPCHYIPRPKPR). Cysteine 11 and cysteine 15 are joined by a disulfide.

The protein belongs to the waglerin family. Waglerin-1 is monomeric. In terms of processing, amidation of the waglerin-1 C-terminus increases the affinity by 2-fold. As to expression, expressed by the venom gland.

The protein resides in the secreted. Its function is as follows. Waglerin-1 selectively blocks the epsilon subunit of muscle nicotinic acetylcholine receptor (nAChR). Also has effects on rodent ionotropic GABA(A) receptors (GABR), since it potentiates I(GABA) in some neurons and depresses I(GABA) in others. In mice, it elicits tachypnea, ocular proptosis, rapid collapse and spasms, whereas no toxic effects on respiration and blood pressure are observed in rats. In terms of biological role, waglerin-3 selectively blocks the epsilon subunit of muscle nicotinic acetylcholine receptor (nAChR). It elicits tachypnea, ocular proptosis, rapid collapse and spasms in mice. It causes death by respiratory failure. The chain is Waglerin-3 from Tropidolaemus wagleri (Wagler's pit viper).